Consider the following 446-residue polypeptide: Na(+)-translocating NADH-quinone reductase subunit A (446 aa).

It belongs to the NqrA family. As to quaternary structure, composed of six subunits; NqrA, NqrB, NqrC, NqrD, NqrE and NqrF.

It carries out the reaction a ubiquinone + n Na(+)(in) + NADH + H(+) = a ubiquinol + n Na(+)(out) + NAD(+). Its function is as follows. NQR complex catalyzes the reduction of ubiquinone-1 to ubiquinol by two successive reactions, coupled with the transport of Na(+) ions from the cytoplasm to the periplasm. NqrA to NqrE are probably involved in the second step, the conversion of ubisemiquinone to ubiquinol. The protein is Na(+)-translocating NADH-quinone reductase subunit A of Histophilus somni (strain 129Pt) (Haemophilus somnus).